An 80-amino-acid polypeptide reads, in one-letter code: U-scoloptoxin(15)-Er1a (80 aa).

An N-terminal signal peptide occupies residues 1 to 22 (MQNKGVVLTLFLVVSMAIVISS).

Belongs to the scoloptoxin-15 family. Post-translationally, contains 2 disulfide bonds. Expressed by the venom gland.

It localises to the secreted. In Ethmostigmus rubripes (Giant centipede), this protein is U-scoloptoxin(15)-Er1a.